A 204-amino-acid chain; its full sequence is Small ribosomal subunit protein uS4 (204 aa).

The region spanning 94-157 is the S4 RNA-binding domain; it reads RRLDNVVYRL…KKLEVFKENL (64 aa).

It belongs to the universal ribosomal protein uS4 family. As to quaternary structure, part of the 30S ribosomal subunit. Contacts protein S5. The interaction surface between S4 and S5 is involved in control of translational fidelity.

In terms of biological role, one of the primary rRNA binding proteins, it binds directly to 16S rRNA where it nucleates assembly of the body of the 30S subunit. With S5 and S12 plays an important role in translational accuracy. This chain is Small ribosomal subunit protein uS4, found in Sulfurihydrogenibium sp. (strain YO3AOP1).